The following is a 244-amino-acid chain: 1-(5-phosphoribosyl)-5-[(5-phosphoribosylamino)methylideneamino] imidazole-4-carboxamide isomerase (244 aa).

D10 serves as the catalytic Proton acceptor. D129 serves as the catalytic Proton donor.

This sequence belongs to the HisA/HisF family.

It is found in the cytoplasm. It catalyses the reaction 1-(5-phospho-beta-D-ribosyl)-5-[(5-phospho-beta-D-ribosylamino)methylideneamino]imidazole-4-carboxamide = 5-[(5-phospho-1-deoxy-D-ribulos-1-ylimino)methylamino]-1-(5-phospho-beta-D-ribosyl)imidazole-4-carboxamide. It participates in amino-acid biosynthesis; L-histidine biosynthesis; L-histidine from 5-phospho-alpha-D-ribose 1-diphosphate: step 4/9. The sequence is that of 1-(5-phosphoribosyl)-5-[(5-phosphoribosylamino)methylideneamino] imidazole-4-carboxamide isomerase from Rhodococcus jostii (strain RHA1).